A 66-amino-acid chain; its full sequence is Large ribosomal subunit protein bL35 (66 aa).

A compositionally biased stretch (basic residues) spans 1-44; that stretch reads MPKLKSHRGAAKRFRKTASGAIKRRGAYRNHILTKKSTKQKRHL. Residues 1–48 form a disordered region; sequence MPKLKSHRGAAKRFRKTASGAIKRRGAYRNHILTKKSTKQKRHLRVEA.

This sequence belongs to the bacterial ribosomal protein bL35 family.

The polypeptide is Large ribosomal subunit protein bL35 (Legionella pneumophila (strain Corby)).